A 216-amino-acid chain; its full sequence is Probable nicotinate-nucleotide adenylyltransferase (216 aa).

This sequence belongs to the NadD family.

The enzyme catalyses nicotinate beta-D-ribonucleotide + ATP + H(+) = deamido-NAD(+) + diphosphate. It functions in the pathway cofactor biosynthesis; NAD(+) biosynthesis; deamido-NAD(+) from nicotinate D-ribonucleotide: step 1/1. In terms of biological role, catalyzes the reversible adenylation of nicotinate mononucleotide (NaMN) to nicotinic acid adenine dinucleotide (NaAD). In Geobacter sulfurreducens (strain ATCC 51573 / DSM 12127 / PCA), this protein is Probable nicotinate-nucleotide adenylyltransferase.